Here is a 215-residue protein sequence, read N- to C-terminus: Sec-independent protein translocase protein TatB (215 aa).

Residues M1–G21 form a helical membrane-spanning segment. Disordered stretches follow at residues D95–N119 and A138–A215. Residues Q145–E157 are compositionally biased toward basic and acidic residues. The span at S203 to A215 shows a compositional bias: basic residues.

The protein belongs to the TatB family. The Tat system comprises two distinct complexes: a TatABC complex, containing multiple copies of TatA, TatB and TatC subunits, and a separate TatA complex, containing only TatA subunits. Substrates initially bind to the TatABC complex, which probably triggers association of the separate TatA complex to form the active translocon.

Its subcellular location is the cell inner membrane. In terms of biological role, part of the twin-arginine translocation (Tat) system that transports large folded proteins containing a characteristic twin-arginine motif in their signal peptide across membranes. Together with TatC, TatB is part of a receptor directly interacting with Tat signal peptides. TatB may form an oligomeric binding site that transiently accommodates folded Tat precursor proteins before their translocation. This Rhizobium meliloti (strain 1021) (Ensifer meliloti) protein is Sec-independent protein translocase protein TatB.